Reading from the N-terminus, the 426-residue chain is Glutamate-1-semialdehyde 2,1-aminomutase (426 aa).

K265 carries the post-translational modification N6-(pyridoxal phosphate)lysine.

It belongs to the class-III pyridoxal-phosphate-dependent aminotransferase family. HemL subfamily. As to quaternary structure, homodimer. Requires pyridoxal 5'-phosphate as cofactor.

Its subcellular location is the cytoplasm. It catalyses the reaction (S)-4-amino-5-oxopentanoate = 5-aminolevulinate. It participates in porphyrin-containing compound metabolism; protoporphyrin-IX biosynthesis; 5-aminolevulinate from L-glutamyl-tRNA(Glu): step 2/2. This chain is Glutamate-1-semialdehyde 2,1-aminomutase, found in Halorhodospira halophila (strain DSM 244 / SL1) (Ectothiorhodospira halophila (strain DSM 244 / SL1)).